A 159-amino-acid chain; its full sequence is Ribosomal RNA large subunit methyltransferase H (159 aa).

S-adenosyl-L-methionine-binding positions include Leu-76, Gly-108, and 127–132; that span reads FGLLTL.

The protein belongs to the RNA methyltransferase RlmH family. As to quaternary structure, homodimer.

The protein localises to the cytoplasm. The enzyme catalyses pseudouridine(1915) in 23S rRNA + S-adenosyl-L-methionine = N(3)-methylpseudouridine(1915) in 23S rRNA + S-adenosyl-L-homocysteine + H(+). Functionally, specifically methylates the pseudouridine at position 1915 (m3Psi1915) in 23S rRNA. This is Ribosomal RNA large subunit methyltransferase H from Leuconostoc mesenteroides subsp. mesenteroides (strain ATCC 8293 / DSM 20343 / BCRC 11652 / CCM 1803 / JCM 6124 / NCDO 523 / NBRC 100496 / NCIMB 8023 / NCTC 12954 / NRRL B-1118 / 37Y).